We begin with the raw amino-acid sequence, 161 residues long: Nucleotide-binding protein Glov_3198 (161 aa).

Belongs to the YajQ family.

Its function is as follows. Nucleotide-binding protein. The polypeptide is Nucleotide-binding protein Glov_3198 (Trichlorobacter lovleyi (strain ATCC BAA-1151 / DSM 17278 / SZ) (Geobacter lovleyi)).